A 56-amino-acid chain; its full sequence is Ribosome modulation factor (56 aa).

Belongs to the ribosome modulation factor family.

It is found in the cytoplasm. Functionally, during stationary phase, converts 70S ribosomes to an inactive dimeric form (100S ribosomes). The protein is Ribosome modulation factor of Proteus mirabilis (strain HI4320).